The chain runs to 239 residues: MQERKRVLVKFSGEALAGENGFGIENSILKFIASEIKELIKNQIEVGIVIGGGNIIRGVSAAKGGLIKRTSGDHMGMLATVINAIAIQEALERSGLEVRVQSAIQMEAFCETYIMRRAQRHLEKGRVVVFAAGTGNPYFTTDTTAILRAVEIDADMVIKATKVNGVYDKDPKQFDDAVFLNTLSYDEAMQDNIKVMDDTAIALAKDNKLPIVVCNMFEEGNLLKIIQGDTSLCSIVKNN.

Position 10 to 13 (10 to 13 (KFSG)) interacts with ATP. The involved in allosteric activation by GTP stretch occupies residues 18-23 (GENGFG). Gly-52 contributes to the UMP binding site. ATP contacts are provided by Gly-53 and Arg-57. Residues Asp-73 and 134-141 (TGNPYFTT) contribute to the UMP site. ATP contacts are provided by Thr-161, Tyr-167, and Asp-170.

Belongs to the UMP kinase family. In terms of assembly, homohexamer.

It is found in the cytoplasm. It catalyses the reaction UMP + ATP = UDP + ADP. The protein operates within pyrimidine metabolism; CTP biosynthesis via de novo pathway; UDP from UMP (UMPK route): step 1/1. Its activity is regulated as follows. Allosterically activated by GTP. Inhibited by UTP. In terms of biological role, catalyzes the reversible phosphorylation of UMP to UDP. The sequence is that of Uridylate kinase from Campylobacter jejuni subsp. doylei (strain ATCC BAA-1458 / RM4099 / 269.97).